The sequence spans 101 residues: Class II hydrophobin 5 (101 aa).

An N-terminal signal peptide occupies residues 1–15 (MQLTALLALATLAIA). 4 disulfides stabilise this stretch: Cys-33/Cys-83, Cys-44/Cys-74, Cys-45/Cys-57, and Cys-84/Cys-95.

Belongs to the cerato-ulmin hydrophobin family. In terms of assembly, homodimer. Homodimers further self-assemble to form highly ordered films at water-air interfaces through intermolecular interactions.

It localises to the secreted. It is found in the cell wall. Functionally, aerial growth, conidiation, and dispersal of filamentous fungi in the environment rely upon a capability of their secreting small amphipathic proteins called hydrophobins (HPBs) with low sequence identity. Class I can self-assemble into an outermost layer of rodlet bundles on aerial cell surfaces, conferring cellular hydrophobicity that supports fungal growth, development and dispersal; whereas Class II form highly ordered films at water-air interfaces through intermolecular interactions but contribute nothing to the rodlet structure. The sequence is that of Class II hydrophobin 5 from Trichoderma asperellum (strain ATCC 204424 / CBS 433.97 / NBRC 101777).